The primary structure comprises 115 residues: Probable prefoldin subunit 1 (115 aa).

It belongs to the prefoldin subunit beta family. In terms of assembly, heterohexamer of two PFD-alpha type and four PFD-beta type subunits.

Binds specifically to cytosolic chaperonin (c-CPN) and transfers target proteins to it. Binds to nascent polypeptide chain and promotes folding in an environment in which there are many competing pathways for nonnative proteins. In Dictyostelium discoideum (Social amoeba), this protein is Probable prefoldin subunit 1 (pfdn1).